Reading from the N-terminus, the 188-residue chain is uncharacterized protein (188 aa).

The L5-specific motif signature appears at 62 to 77 (ITGEKPLIKLNESTEK).

The protein resides in the mitochondrion. This is an uncharacterized protein from Dictyostelium discoideum (Social amoeba).